The following is a 147-amino-acid chain: Ribosome-binding factor A (147 aa).

Residues A127–E147 are disordered.

It belongs to the RbfA family. As to quaternary structure, monomer. Binds 30S ribosomal subunits, but not 50S ribosomal subunits or 70S ribosomes.

It localises to the cytoplasm. Its function is as follows. One of several proteins that assist in the late maturation steps of the functional core of the 30S ribosomal subunit. Associates with free 30S ribosomal subunits (but not with 30S subunits that are part of 70S ribosomes or polysomes). Required for efficient processing of 16S rRNA. May interact with the 5'-terminal helix region of 16S rRNA. The protein is Ribosome-binding factor A of Nocardia farcinica (strain IFM 10152).